The primary structure comprises 304 residues: 3-diazoavenalumate denitrifying reductase (304 aa).

The protein belongs to the NAD(P)-dependent epimerase/dehydratase family.

The enzyme catalyses 3-diazoavenalumate + NADPH + H(+) = avenalumate + N2 + NADP(+). It carries out the reaction 3-diazoavenalumate + NADH + H(+) = avenalumate + N2 + NAD(+). The catalysed reaction is (E)-3-diazocoumarate + NADPH = N2 + (E)-4-coumarate + NADP(+). It catalyses the reaction (E)-3-diazocoumarate + NADH = N2 + (E)-4-coumarate + NAD(+). Oxidoreductase involved in the biosynthesis of avenalumic acid (AVA). Catalyzes the denitrification of 3-diazoavenalumic acid (3-DAA) to produce AVA. It can also act on 3-diazocoumaric acid (3-DCA). Can use NADPH or NADH as a reductant, with a preference for NADPH. In Streptomyces sp, this protein is 3-diazoavenalumate denitrifying reductase.